A 121-amino-acid polypeptide reads, in one-letter code: UPF0102 protein Dhaf_3740 (121 aa).

It belongs to the UPF0102 family.

This chain is UPF0102 protein Dhaf_3740, found in Desulfitobacterium hafniense (strain DSM 10664 / DCB-2).